Here is a 603-residue protein sequence, read N- to C-terminus: Sesquiterpene synthase Cad (603 aa).

The span at 1 to 13 (MAEVGLSQNSYAS) shows a compositional bias: polar residues. A disordered region spans residues 1-23 (MAEVGLSQNSYASANHDKKSEQQ). Mg(2+) is bound by residues D357, D361, D498, and E506. The DDXXD motif motif lies at 357–361 (DDIFD).

Belongs to the terpene synthase family. Tpsa subfamily. Mg(2+) is required as a cofactor. Mn(2+) serves as cofactor. Mostly expressed in leaves and, to a lower extent, in stems and xylem.

The catalysed reaction is (2E,6E)-farnesyl diphosphate = beta-cadinene + diphosphate. The protein operates within secondary metabolite biosynthesis; terpenoid biosynthesis. Sesquiterpene synthase involved in the biosynthesis of volatile compounds. Mediates the conversion of (2E,6E)-farnesyl diphosphate (FPP) into beta-cadinene. Not active with geranyl diphosphate (GPP) and geranylgeranyl diphosphate (GGPP) as substrates. This is Sesquiterpene synthase Cad from Chamaecyparis formosensis (Formosan cypress).